The sequence spans 82 residues: Cysteine proteinase inhibitor A (82 aa).

Belongs to the cystatin family.

Functionally, strong inhibitor of papain and ficin but poor inhibitor of cathepsin H, B and L. This Helianthus annuus (Common sunflower) protein is Cysteine proteinase inhibitor A.